The following is a 158-amino-acid chain: 6,7-dimethyl-8-ribityllumazine synthase (158 aa).

Residues Phe22, 57–59 (AVE), and 81–83 (AVI) contribute to the 5-amino-6-(D-ribitylamino)uracil site. 86–87 (GT) is a binding site for (2S)-2-hydroxy-3-oxobutyl phosphate. His89 functions as the Proton donor in the catalytic mechanism. A 5-amino-6-(D-ribitylamino)uracil-binding site is contributed by Phe114. Residue Arg128 coordinates (2S)-2-hydroxy-3-oxobutyl phosphate.

It belongs to the DMRL synthase family. As to quaternary structure, forms an icosahedral capsid composed of 60 subunits, arranged as a dodecamer of pentamers.

The catalysed reaction is (2S)-2-hydroxy-3-oxobutyl phosphate + 5-amino-6-(D-ribitylamino)uracil = 6,7-dimethyl-8-(1-D-ribityl)lumazine + phosphate + 2 H2O + H(+). Its pathway is cofactor biosynthesis; riboflavin biosynthesis; riboflavin from 2-hydroxy-3-oxobutyl phosphate and 5-amino-6-(D-ribitylamino)uracil: step 1/2. Catalyzes the formation of 6,7-dimethyl-8-ribityllumazine by condensation of 5-amino-6-(D-ribitylamino)uracil with 3,4-dihydroxy-2-butanone 4-phosphate. This is the penultimate step in the biosynthesis of riboflavin. This Shewanella piezotolerans (strain WP3 / JCM 13877) protein is 6,7-dimethyl-8-ribityllumazine synthase.